We begin with the raw amino-acid sequence, 517 residues long: General transcription factor IIF subunit 1 (517 aa).

The residue at position 2 (A2) is an N-acetylalanine. Position 156 is a phosphothreonine (T156). The tract at residues 178–466 (QQRRLKDQDQ…DAVRRYLTRK (289 aa)) is disordered. Residues S217, S218, S221, and S224 each carry the phosphoserine modification. Over residues 232-251 (PKAKKKAPLAKGGRKKKKKK) the composition is skewed to basic residues. 2 stretches are compositionally biased toward acidic residues: residues 255–270 (DEAF…EGQE) and 303–325 (EQSD…EEEE). T331 carries the phosphothreonine modification. The segment covering 343–355 (EESDSSEESDIDS) has biased composition (acidic residues). The span at 364–374 (AKKKTPPKRER) shows a compositional bias: basic residues. 4 positions are modified to phosphoserine: S377, S380, S381, and S385. A compositionally biased stretch (low complexity) spans 377–391 (SGGSSRGNSRPGTPS). T389 is subject to Phosphothreonine. A Phosphoserine modification is found at S391. K407 is subject to N6-acetyllysine. Polar residues predominate over residues 428-452 (GPQSLSGKSTPQPPSGKTTPNSGDV). Phosphoserine is present on residues S431, S433, and S436. 2 positions are modified to phosphothreonine: T437 and T446. S449 is modified (phosphoserine). E503, H512, and E517 together coordinate Zn(2+).

This sequence belongs to the TFIIF alpha subunit family. Heterodimer of an alpha and a beta subunit. Interacts with GTF2F2, CTDP1, TAF6/TAFII80 and URI1. Interacts with GTF2B (via C-terminus and preferentially via acetylated form); this interaction prevents binding of GTF2B to GTF2F2. Part of TBP-based Pol II pre-initiation complex (PIC), in which Pol II core assembles with general transcription factors and other specific initiation factors including GTF2E1, GTF2E2, GTF2F1, GTF2F2, TCEA1, ERCC2, ERCC3, GTF2H2, GTF2H3, GTF2H4, GTF2H5, GTF2A1, GTF2A2, GTF2B and TBP; this large multi-subunit PIC complex mediates DNA unwinding and targets Pol II core to the transcription start site where the first phosphodiester bond forms. In terms of processing, phosphorylated on Ser and other residues by TAF1 and casein kinase II-like kinases.

The protein localises to the nucleus. TFIIF is a general transcription initiation factor that binds to RNA polymerase II and helps to recruit it to the initiation complex in collaboration with TFIIB. It promotes transcription elongation. In Homo sapiens (Human), this protein is General transcription factor IIF subunit 1 (GTF2F1).